The chain runs to 89 residues: Small ribosomal subunit protein uS14A (89 aa).

Belongs to the universal ribosomal protein uS14 family. Part of the 30S ribosomal subunit. Contacts proteins S3 and S10.

Binds 16S rRNA, required for the assembly of 30S particles and may also be responsible for determining the conformation of the 16S rRNA at the A site. This Staphylococcus epidermidis (strain ATCC 35984 / DSM 28319 / BCRC 17069 / CCUG 31568 / BM 3577 / RP62A) protein is Small ribosomal subunit protein uS14A.